The chain runs to 149 residues: Large ribosomal subunit protein uL15 (149 aa).

Residues 1-28 (MVIKIHDLRPAPGSKRDKIRVGRGEGSK) are compositionally biased toward basic and acidic residues. The tract at residues 1 to 54 (MVIKIHDLRPAPGSKRDKIRVGRGEGSKGKTAGRGTKGTKARKNVSPRFEGGQM) is disordered.

The protein belongs to the universal ribosomal protein uL15 family. As to quaternary structure, part of the 50S ribosomal subunit.

Its function is as follows. Binds to the 23S rRNA. This chain is Large ribosomal subunit protein uL15, found in Saccharopolyspora erythraea (strain ATCC 11635 / DSM 40517 / JCM 4748 / NBRC 13426 / NCIMB 8594 / NRRL 2338).